We begin with the raw amino-acid sequence, 391 residues long: Lipid-A-disaccharide synthase (391 aa).

Belongs to the LpxB family.

The catalysed reaction is a lipid X + a UDP-2-N,3-O-bis[(3R)-3-hydroxyacyl]-alpha-D-glucosamine = a lipid A disaccharide + UDP + H(+). It functions in the pathway bacterial outer membrane biogenesis; LPS lipid A biosynthesis. Condensation of UDP-2,3-diacylglucosamine and 2,3-diacylglucosamine-1-phosphate to form lipid A disaccharide, a precursor of lipid A, a phosphorylated glycolipid that anchors the lipopolysaccharide to the outer membrane of the cell. The sequence is that of Lipid-A-disaccharide synthase from Azoarcus sp. (strain BH72).